We begin with the raw amino-acid sequence, 121 residues long: Large ribosomal subunit protein uL18 (121 aa).

Belongs to the universal ribosomal protein uL18 family. In terms of assembly, part of the 50S ribosomal subunit; part of the 5S rRNA/L5/L18/L25 subcomplex. Contacts the 5S and 23S rRNAs.

In terms of biological role, this is one of the proteins that bind and probably mediate the attachment of the 5S RNA into the large ribosomal subunit, where it forms part of the central protuberance. The chain is Large ribosomal subunit protein uL18 from Desulfotalea psychrophila (strain LSv54 / DSM 12343).